The primary structure comprises 243 residues: Triosephosphate isomerase (243 aa).

9–11 provides a ligand contact to substrate; sequence NWK. His96 functions as the Electrophile in the catalytic mechanism. The active-site Proton acceptor is Glu165. Residues Gly171, Ser204, and 225-226 each bind substrate; that span reads GG.

This sequence belongs to the triosephosphate isomerase family. In terms of assembly, homodimer.

The protein resides in the cytoplasm. The enzyme catalyses D-glyceraldehyde 3-phosphate = dihydroxyacetone phosphate. It participates in carbohydrate biosynthesis; gluconeogenesis. The protein operates within carbohydrate degradation; glycolysis; D-glyceraldehyde 3-phosphate from glycerone phosphate: step 1/1. Functionally, involved in the gluconeogenesis. Catalyzes stereospecifically the conversion of dihydroxyacetone phosphate (DHAP) to D-glyceraldehyde-3-phosphate (G3P). The protein is Triosephosphate isomerase of Synechococcus sp. (strain CC9311).